Consider the following 160-residue polypeptide: Photosystem II extrinsic protein V (160 aa).

The first 25 residues, 1-25 (MKRFFLVAIASVLFFFNTMVGSANA), serve as a signal peptide directing secretion. Residues Cys62, Cys65, His66, and His117 each coordinate heme c.

Belongs to the cytochrome c family. PsbV subfamily. PSII is composed of 1 copy each of membrane proteins PsbA, PsbB, PsbC, PsbD, PsbE, PsbF, PsbH, PsbI, PsbJ, PsbK, PsbL, PsbM, PsbT, PsbX, PsbY, PsbZ, Psb30/Ycf12, peripheral proteins PsbO, CyanoQ (PsbQ), PsbU, PsbV and a large number of cofactors. It forms dimeric complexes. The cyanobacterial oxygen-evolving complex is composed of PsbO, CyanoQ (PsbQ), PsbV and PsbU. Requires heme c as cofactor.

The protein resides in the cellular thylakoid membrane. Its function is as follows. One of the extrinsic, lumenal subunits of photosystem II (PSII). PSII is a light-driven water plastoquinone oxidoreductase, using light energy to abstract electrons from H(2)O, generating a proton gradient subsequently used for ATP formation. The extrinsic proteins stabilize the structure of photosystem II oxygen-evolving complex (OEC), the ion environment of oxygen evolution and protect the OEC against heat-induced inactivation. Low-potential cytochrome c that plays a role in the OEC of PSII, required for normal function or stabilization of PSII. The protein is Photosystem II extrinsic protein V of Synechocystis sp. (strain ATCC 27184 / PCC 6803 / Kazusa).